Here is a 466-residue protein sequence, read N- to C-terminus: Argininosuccinate lyase (466 aa).

The protein belongs to the lyase 1 family. Argininosuccinate lyase subfamily.

The protein resides in the cytoplasm. The enzyme catalyses 2-(N(omega)-L-arginino)succinate = fumarate + L-arginine. It functions in the pathway amino-acid biosynthesis; L-arginine biosynthesis; L-arginine from L-ornithine and carbamoyl phosphate: step 3/3. The sequence is that of Argininosuccinate lyase from Roseobacter denitrificans (strain ATCC 33942 / OCh 114) (Erythrobacter sp. (strain OCh 114)).